We begin with the raw amino-acid sequence, 130 residues long: Small ribosomal subunit protein uS9 (130 aa).

The protein belongs to the universal ribosomal protein uS9 family.

The polypeptide is Small ribosomal subunit protein uS9 (Burkholderia cenocepacia (strain HI2424)).